Here is a 161-residue protein sequence, read N- to C-terminus: Vitamin K epoxide reductase complex subunit 1 (161 aa).

At 1 to 9 (MGTTWRSPG) the chain is on the cytoplasmic side. A helical membrane pass occupies residues 10–29 (LVRLALCLAGLALSLYALHV). Residues 30–80 (KAARARDENYRALCDVGTAISCSRVFSSRWGRGFGLVEHMLGADSVLNQSN) are Lumenal-facing. A disulfide bridge connects residues C43 and C51. Residue N80 participates in (S)-warfarin binding. A helical membrane pass occupies residues 81 to 95 (SIFGCLFYTLQLLLG). Residues 96-100 (CLRGR) are Cytoplasmic-facing. A helical transmembrane segment spans residues 101-128 (WASILLVLSSLVSVAGSVYLAWILFFVL). The Lumenal segment spans residues 129–131 (YDF). The cysteines at positions 132 and 135 are disulfide-linked. A helical transmembrane segment spans residues 132 to 153 (CIVCITTYAINVGLMLLSFQKV). Phylloquinone is bound by residues C135 and Y139. Y139 lines the (S)-warfarin pocket. The Cytoplasmic portion of the chain corresponds to 154–161 (PEHKTKKH).

The protein belongs to the VKOR family. As to expression, detected in liver.

Its subcellular location is the endoplasmic reticulum membrane. The catalysed reaction is phylloquinone + [protein]-disulfide + H2O = 2,3-epoxyphylloquinone + [protein]-dithiol. It carries out the reaction phylloquinol + [protein]-disulfide = phylloquinone + [protein]-dithiol. Inhibited by warfarin (coumadin). Warfarin locks VKORC1 in both redox states into the closed conformation. Its function is as follows. Involved in vitamin K metabolism. Catalytic subunit of the vitamin K epoxide reductase (VKOR) complex which reduces inactive vitamin K 2,3-epoxide to active vitamin K. Vitamin K is required for the gamma-carboxylation of various proteins, including clotting factors, and is required for normal blood coagulation, but also for normal bone development. The protein is Vitamin K epoxide reductase complex subunit 1 (Vkorc1) of Mus musculus (Mouse).